A 495-amino-acid polypeptide reads, in one-letter code: Thiosulfate sulfurtransferase/rhodanese-like domain-containing protein 2 (495 aa).

The residue at position 268 (Ser268) is a Phosphoserine. In terms of domain architecture, Rhodanese spans 300-395; the sequence is EQGNTIILDC…YLEEFPDGFY (96 aa). Cys354 functions as the Cysteine persulfide intermediate in the catalytic mechanism.

The sequence is that of Thiosulfate sulfurtransferase/rhodanese-like domain-containing protein 2 (Tstd2) from Mus musculus (Mouse).